A 121-amino-acid polypeptide reads, in one-letter code: Small ribosomal subunit protein uS13 (121 aa).

A disordered region spans residues 93–121 (RGLPMRGQRTRTNARTRKGPRKGAAALKK).

This sequence belongs to the universal ribosomal protein uS13 family. In terms of assembly, part of the 30S ribosomal subunit. Forms a loose heterodimer with protein S19. Forms two bridges to the 50S subunit in the 70S ribosome.

Its function is as follows. Located at the top of the head of the 30S subunit, it contacts several helices of the 16S rRNA. In the 70S ribosome it contacts the 23S rRNA (bridge B1a) and protein L5 of the 50S subunit (bridge B1b), connecting the 2 subunits; these bridges are implicated in subunit movement. Contacts the tRNAs in the A and P-sites. The chain is Small ribosomal subunit protein uS13 from Paracidovorax citrulli (strain AAC00-1) (Acidovorax citrulli).